A 341-amino-acid polypeptide reads, in one-letter code: tRNA N6-adenosine threonylcarbamoyltransferase (341 aa).

H115 and H119 together coordinate Fe cation. Substrate contacts are provided by residues 138–142, D171, G184, and N276; that span reads LVSGG. Residue D304 participates in Fe cation binding.

It belongs to the KAE1 / TsaD family. Fe(2+) is required as a cofactor.

The protein resides in the cytoplasm. It carries out the reaction L-threonylcarbamoyladenylate + adenosine(37) in tRNA = N(6)-L-threonylcarbamoyladenosine(37) in tRNA + AMP + H(+). Required for the formation of a threonylcarbamoyl group on adenosine at position 37 (t(6)A37) in tRNAs that read codons beginning with adenine. Is involved in the transfer of the threonylcarbamoyl moiety of threonylcarbamoyl-AMP (TC-AMP) to the N6 group of A37, together with TsaE and TsaB. TsaD likely plays a direct catalytic role in this reaction. This Stenotrophomonas maltophilia (strain R551-3) protein is tRNA N6-adenosine threonylcarbamoyltransferase.